Consider the following 156-residue polypeptide: Protein-export protein SecB (156 aa).

This sequence belongs to the SecB family. Homotetramer, a dimer of dimers. One homotetramer interacts with 1 SecA dimer.

It localises to the cytoplasm. Functionally, one of the proteins required for the normal export of preproteins out of the cell cytoplasm. It is a molecular chaperone that binds to a subset of precursor proteins, maintaining them in a translocation-competent state. It also specifically binds to its receptor SecA. This is Protein-export protein SecB from Paraburkholderia phymatum (strain DSM 17167 / CIP 108236 / LMG 21445 / STM815) (Burkholderia phymatum).